The sequence spans 390 residues: Probable purine permease 10 (390 aa).

Helical transmembrane passes span 44–64 (WLRVTLYTFFVISGQTVATIL), 78–98 (LATVVQLVGFPVLLPYYILSF), 117–137 (VLVYVVLGLLVGADCYLYSIG), 140–160 (YLPVSTYSLICASQLAFNAFF), 169–189 (LTPIILNSLFLLTISSTLLAF), 204–224 (YVKGFICTVAASAGYGLVLSL), 241–261 (VMDMIIYVSLVASCVSVVGLF), 287–307 (LVWTAVTWQVFSIGGTGLIFE), 312–332 (FSNAISVLGLPVVPILAVIIF), and 336–356 (MNGLKVISMILAIWGFTSYVY). Residues 370–390 (EITTTESPDPPEAEESTWQSK) are disordered.

This sequence belongs to the purine permeases (TC 2.A.7.14) family.

It is found in the membrane. This is Probable purine permease 10 (PUP10) from Arabidopsis thaliana (Mouse-ear cress).